Here is a 216-residue protein sequence, read N- to C-terminus: ATP-dependent dethiobiotin synthetase BioD (216 aa).

12-17 (GVGKSY) serves as a coordination point for ATP. Mg(2+) is bound at residue Ser-16. Lys-37 is a catalytic residue. Thr-41 is a substrate binding site. The Mg(2+) site is built by His-53 and Glu-115. 115-118 (EGAG) is an ATP binding site.

It belongs to the dethiobiotin synthetase family. In terms of assembly, homodimer. Mg(2+) is required as a cofactor.

The protein resides in the cytoplasm. It carries out the reaction (7R,8S)-7,8-diammoniononanoate + CO2 + ATP = (4R,5S)-dethiobiotin + ADP + phosphate + 3 H(+). The protein operates within cofactor biosynthesis; biotin biosynthesis; biotin from 7,8-diaminononanoate: step 1/2. In terms of biological role, catalyzes a mechanistically unusual reaction, the ATP-dependent insertion of CO2 between the N7 and N8 nitrogen atoms of 7,8-diaminopelargonic acid (DAPA, also called 7,8-diammoniononanoate) to form a ureido ring. This is ATP-dependent dethiobiotin synthetase BioD from Wolinella succinogenes (strain ATCC 29543 / DSM 1740 / CCUG 13145 / JCM 31913 / LMG 7466 / NCTC 11488 / FDC 602W) (Vibrio succinogenes).